Consider the following 1222-residue polypeptide: Chitin synthase 4 (1222 aa).

The tract at residues Met1 to Tyr108 is disordered. Residues Leu51–Val68 show a composition bias toward polar residues. Asn64 carries N-linked (GlcNAc...) asparagine glycosylation. Over residues Ile94 to Asn107 the composition is skewed to basic and acidic residues. Asn116 is a glycosylation site (N-linked (GlcNAc...) asparagine). Residues Thr136–Gln199 are disordered. Residues Thr137–Ser154 show a composition bias toward polar residues. Positions Ser176 to Ser196 are enriched in basic residues. A run of 2 helical transmembrane segments spans residues Pro204–Leu224 and Met242–Phe262. Residues Asn378 and Asn418 are each glycosylated (N-linked (GlcNAc...) asparagine). A helical transmembrane segment spans residues Tyr509–Phe529. The segment at Arg595–Gly662 is disordered. A compositionally biased stretch (polar residues) spans Asn608–Leu643. N-linked (GlcNAc...) asparagine glycosylation is found at Asn636 and Asn1031. 3 consecutive transmembrane segments (helical) span residues Phe1056 to Phe1076, Val1090 to Thr1110, and Tyr1116 to Val1136. A disordered region spans residues Gly1201–Ala1222. Positions Gln1213–Ala1222 are enriched in basic and acidic residues.

The protein belongs to the chitin synthase family. Class IV subfamily.

It is found in the cell membrane. It catalyses the reaction [(1-&gt;4)-N-acetyl-beta-D-glucosaminyl](n) + UDP-N-acetyl-alpha-D-glucosamine = [(1-&gt;4)-N-acetyl-beta-D-glucosaminyl](n+1) + UDP + H(+). In terms of biological role, polymerizes chitin, a structural polymer of the cell wall and septum, by transferring the sugar moiety of UDP-GlcNAc to the non-reducing end of the growing chitin polymer. Plays a role in cell wall integrity and is involved in tolerance to hyperosmotic conditions. Required to successfully penetrate the host plants and thus plays a key role in pathogenicity. The chain is Chitin synthase 4 from Verticillium dahliae (strain VdLs.17 / ATCC MYA-4575 / FGSC 10137) (Verticillium wilt).